A 311-amino-acid chain; its full sequence is tRNA-cytidine(32) 2-sulfurtransferase (311 aa).

Residues 47–52 carry the PP-loop motif motif; sequence SGGKDS. Residues C122, C125, and C213 each contribute to the [4Fe-4S] cluster site.

The protein belongs to the TtcA family. As to quaternary structure, homodimer. Requires Mg(2+) as cofactor. [4Fe-4S] cluster serves as cofactor.

It is found in the cytoplasm. It catalyses the reaction cytidine(32) in tRNA + S-sulfanyl-L-cysteinyl-[cysteine desulfurase] + AH2 + ATP = 2-thiocytidine(32) in tRNA + L-cysteinyl-[cysteine desulfurase] + A + AMP + diphosphate + H(+). It participates in tRNA modification. Its function is as follows. Catalyzes the ATP-dependent 2-thiolation of cytidine in position 32 of tRNA, to form 2-thiocytidine (s(2)C32). The sulfur atoms are provided by the cysteine/cysteine desulfurase (IscS) system. This is tRNA-cytidine(32) 2-sulfurtransferase from Escherichia coli (strain 55989 / EAEC).